The chain runs to 218 residues: Thiamine-phosphate synthase (218 aa).

4-amino-2-methyl-5-(diphosphooxymethyl)pyrimidine is bound by residues 46 to 50 (QFRDK) and D83. Mg(2+)-binding residues include D84 and D103. 4-amino-2-methyl-5-(diphosphooxymethyl)pyrimidine is bound at residue S122. 149–151 (TNS) provides a ligand contact to 2-[(2R,5Z)-2-carboxy-4-methylthiazol-5(2H)-ylidene]ethyl phosphate. A 4-amino-2-methyl-5-(diphosphooxymethyl)pyrimidine-binding site is contributed by K152. 2-[(2R,5Z)-2-carboxy-4-methylthiazol-5(2H)-ylidene]ethyl phosphate contacts are provided by residues G181 and 201-202 (IT).

This sequence belongs to the thiamine-phosphate synthase family. Requires Mg(2+) as cofactor.

It carries out the reaction 2-[(2R,5Z)-2-carboxy-4-methylthiazol-5(2H)-ylidene]ethyl phosphate + 4-amino-2-methyl-5-(diphosphooxymethyl)pyrimidine + 2 H(+) = thiamine phosphate + CO2 + diphosphate. It catalyses the reaction 2-(2-carboxy-4-methylthiazol-5-yl)ethyl phosphate + 4-amino-2-methyl-5-(diphosphooxymethyl)pyrimidine + 2 H(+) = thiamine phosphate + CO2 + diphosphate. The enzyme catalyses 4-methyl-5-(2-phosphooxyethyl)-thiazole + 4-amino-2-methyl-5-(diphosphooxymethyl)pyrimidine + H(+) = thiamine phosphate + diphosphate. It participates in cofactor biosynthesis; thiamine diphosphate biosynthesis; thiamine phosphate from 4-amino-2-methyl-5-diphosphomethylpyrimidine and 4-methyl-5-(2-phosphoethyl)-thiazole: step 1/1. Condenses 4-methyl-5-(beta-hydroxyethyl)thiazole monophosphate (THZ-P) and 2-methyl-4-amino-5-hydroxymethyl pyrimidine pyrophosphate (HMP-PP) to form thiamine monophosphate (TMP). The chain is Thiamine-phosphate synthase from Actinobacillus pleuropneumoniae serotype 7 (strain AP76).